A 721-amino-acid chain; its full sequence is Glucans biosynthesis glucosyltransferase H (721 aa).

6 helical membrane passes run 52 to 72, 97 to 117, 412 to 432, 459 to 479, 505 to 525, and 570 to 590; these read CSWR…FAIF, NFCW…VLAS, SPFW…AHFI, FYIT…LLMF, ALVA…ILFG, and LLAW…LSGI.

This sequence belongs to the glycosyltransferase 2 family. OpgH subfamily.

It localises to the cell inner membrane. It functions in the pathway glycan metabolism; osmoregulated periplasmic glucan (OPG) biosynthesis. Involved in the biosynthesis of osmoregulated periplasmic glucans (OPGs). In Vibrio cholerae serotype O1 (strain ATCC 39541 / Classical Ogawa 395 / O395), this protein is Glucans biosynthesis glucosyltransferase H.